The chain runs to 84 residues: Small ribosomal subunit protein bS18 (84 aa).

The protein belongs to the bacterial ribosomal protein bS18 family. In terms of assembly, part of the 30S ribosomal subunit. Forms a tight heterodimer with protein bS6.

Functionally, binds as a heterodimer with protein bS6 to the central domain of the 16S rRNA, where it helps stabilize the platform of the 30S subunit. This Polynucleobacter necessarius subsp. necessarius (strain STIR1) protein is Small ribosomal subunit protein bS18.